The chain runs to 173 residues: Dual-action ribosomal maturation protein DarP (173 aa).

Belongs to the DarP family.

It localises to the cytoplasm. Its function is as follows. Member of a network of 50S ribosomal subunit biogenesis factors which assembles along the 30S-50S interface, preventing incorrect 23S rRNA structures from forming. Promotes peptidyl transferase center (PTC) maturation. This Pseudomonas putida (strain ATCC 700007 / DSM 6899 / JCM 31910 / BCRC 17059 / LMG 24140 / F1) protein is Dual-action ribosomal maturation protein DarP.